A 435-amino-acid polypeptide reads, in one-letter code: Oocyte zinc finger protein XlCOF22 (435 aa).

The tract at residues N71–T92 is disordered. Positions R80–H91 are enriched in basic and acidic residues. C2H2-type zinc fingers lie at residues H97–H120, F126–H148, F154–H176, F182–H204, F210–H232, F238–H260, F266–H288, F294–H316, Y322–H345, F351–H373, F379–H402, and V408–H430.

This sequence belongs to the krueppel C2H2-type zinc-finger protein family.

It is found in the nucleus. Functionally, may be involved in transcriptional regulation. The polypeptide is Oocyte zinc finger protein XlCOF22 (Xenopus laevis (African clawed frog)).